A 302-amino-acid chain; its full sequence is Phosphoribosylaminoimidazole-succinocarboxamide synthase (302 aa).

It belongs to the SAICAR synthetase family.

It carries out the reaction 5-amino-1-(5-phospho-D-ribosyl)imidazole-4-carboxylate + L-aspartate + ATP = (2S)-2-[5-amino-1-(5-phospho-beta-D-ribosyl)imidazole-4-carboxamido]succinate + ADP + phosphate + 2 H(+). Its pathway is purine metabolism; IMP biosynthesis via de novo pathway; 5-amino-1-(5-phospho-D-ribosyl)imidazole-4-carboxamide from 5-amino-1-(5-phospho-D-ribosyl)imidazole-4-carboxylate: step 1/2. This Cupriavidus taiwanensis (strain DSM 17343 / BCRC 17206 / CCUG 44338 / CIP 107171 / LMG 19424 / R1) (Ralstonia taiwanensis (strain LMG 19424)) protein is Phosphoribosylaminoimidazole-succinocarboxamide synthase.